The following is a 595-amino-acid chain: Chaperone protein HscA homolog (595 aa).

The protein belongs to the heat shock protein 70 family.

In terms of biological role, chaperone involved in the maturation of iron-sulfur cluster-containing proteins. Has a low intrinsic ATPase activity which is markedly stimulated by HscB. The chain is Chaperone protein HscA homolog from Rickettsia rickettsii (strain Iowa).